The sequence spans 210 residues: MKETIAQHLLDIEAVTLRPNDPFTWSSGIKSPIYCDNRLTMGYPHIRQSIAEGFEQLIRSHFPEVTVVAGTATAGIPHAAWVSDRLQAPMVYVRSKSKGHGKQNQIEGKLSSKDRVVIIEDLISTGGSVIQAADALREAGADVLGVVAIFTYGLEKGQDQLEAANLPSYVLTDYPTLLDVAIRRGDISEEELQKLQKWRENPSSQSWMNE.

5-phospho-alpha-D-ribose 1-diphosphate is bound by residues Arg94, Lys98, His100, and 120-128 (EDLISTGGS). Ser124 contributes to the orotate binding site.

It belongs to the purine/pyrimidine phosphoribosyltransferase family. PyrE subfamily. As to quaternary structure, homodimer. Mg(2+) serves as cofactor.

The catalysed reaction is orotidine 5'-phosphate + diphosphate = orotate + 5-phospho-alpha-D-ribose 1-diphosphate. The protein operates within pyrimidine metabolism; UMP biosynthesis via de novo pathway; UMP from orotate: step 1/2. Catalyzes the transfer of a ribosyl phosphate group from 5-phosphoribose 1-diphosphate to orotate, leading to the formation of orotidine monophosphate (OMP). This is Orotate phosphoribosyltransferase from Halalkalibacterium halodurans (strain ATCC BAA-125 / DSM 18197 / FERM 7344 / JCM 9153 / C-125) (Bacillus halodurans).